A 261-amino-acid polypeptide reads, in one-letter code: Cytochrome c oxidase subunit 3 (261 aa).

The Mitochondrial matrix segment spans residues 1–15; sequence MTHQTHAYHMVNPSP. A helical transmembrane segment spans residues 16–34; sequence WPLTGALSALLMTSGLAMW. Topologically, residues 35–40 are mitochondrial intermembrane; that stretch reads FHFNSP. The helical transmembrane segment at 41–66 threads the bilayer; the sequence is SLLLIGLVTNTLTMYQWWRDIVREGT. Topologically, residues 67–72 are mitochondrial matrix; the sequence is FQGHHT. The helical transmembrane segment at 73–105 threads the bilayer; sequence PIVQKGLRYGMILFIISEVFFFAGFFWAFYHSS. Topologically, residues 106 to 128 are mitochondrial intermembrane; it reads LAPTPELGGCWPPTGINPLNPLE. Residues 129–152 traverse the membrane as a helical segment; it reads VPLLNTSVLLASGVSITWAHHSLM. The Mitochondrial matrix portion of the chain corresponds to 153-155; that stretch reads EGN. Residues 156–183 form a helical membrane-spanning segment; sequence RKNMQQALAITILLGIYFTLLQASEYYE. The Mitochondrial intermembrane portion of the chain corresponds to 184 to 190; sequence TSFTISD. A helical transmembrane segment spans residues 191-223; that stretch reads GVYGSTFFMATGFHGLHVIIGSTFLTVCLLRQF. Residues 224–232 are Mitochondrial matrix-facing; the sequence is NFHFTSNHH. A helical membrane pass occupies residues 233–256; that stretch reads FGFEAAAWYWHFVDVVWLFLYVSI. Residues 257-261 lie on the Mitochondrial intermembrane side of the membrane; sequence YWWGS.

This sequence belongs to the cytochrome c oxidase subunit 3 family. As to quaternary structure, component of the cytochrome c oxidase (complex IV, CIV), a multisubunit enzyme composed of 14 subunits. The complex is composed of a catalytic core of 3 subunits MT-CO1, MT-CO2 and MT-CO3, encoded in the mitochondrial DNA, and 11 supernumerary subunits COX4I, COX5A, COX5B, COX6A, COX6B, COX6C, COX7A, COX7B, COX7C, COX8 and NDUFA4, which are encoded in the nuclear genome. The complex exists as a monomer or a dimer and forms supercomplexes (SCs) in the inner mitochondrial membrane with NADH-ubiquinone oxidoreductase (complex I, CI) and ubiquinol-cytochrome c oxidoreductase (cytochrome b-c1 complex, complex III, CIII), resulting in different assemblies (supercomplex SCI(1)III(2)IV(1) and megacomplex MCI(2)III(2)IV(2)).

The protein localises to the mitochondrion inner membrane. The enzyme catalyses 4 Fe(II)-[cytochrome c] + O2 + 8 H(+)(in) = 4 Fe(III)-[cytochrome c] + 2 H2O + 4 H(+)(out). Functionally, component of the cytochrome c oxidase, the last enzyme in the mitochondrial electron transport chain which drives oxidative phosphorylation. The respiratory chain contains 3 multisubunit complexes succinate dehydrogenase (complex II, CII), ubiquinol-cytochrome c oxidoreductase (cytochrome b-c1 complex, complex III, CIII) and cytochrome c oxidase (complex IV, CIV), that cooperate to transfer electrons derived from NADH and succinate to molecular oxygen, creating an electrochemical gradient over the inner membrane that drives transmembrane transport and the ATP synthase. Cytochrome c oxidase is the component of the respiratory chain that catalyzes the reduction of oxygen to water. Electrons originating from reduced cytochrome c in the intermembrane space (IMS) are transferred via the dinuclear copper A center (CU(A)) of subunit 2 and heme A of subunit 1 to the active site in subunit 1, a binuclear center (BNC) formed by heme A3 and copper B (CU(B)). The BNC reduces molecular oxygen to 2 water molecules using 4 electrons from cytochrome c in the IMS and 4 protons from the mitochondrial matrix. The sequence is that of Cytochrome c oxidase subunit 3 (MT-CO3) from Oryctolagus cuniculus (Rabbit).